The following is a 625-amino-acid chain: Somatic embryogenesis receptor kinase 1 (625 aa).

The signal sequence occupies residues Met1–Ala26. Topologically, residues Asn27 to Gly238 are extracellular. Cys58 and Cys65 are disulfide-bonded. Leucine-rich repeat receptor-like protein kinase binding regions lie at residues Thr59–Asn78 and Tyr97–Ser102. Phe61–His62 is a brassinolide binding site. LRR repeat units follow at residues Leu92–Leu116, Asn118–Leu140, Ser141–Ile164, and Thr165–Leu189. Asn104 and Asn115 each carry an N-linked (GlcNAc...) asparagine glycan. Leucine-rich repeat receptor-like protein kinase binding stretches follow at residues Asp123–Leu126 and Phe145–Arg147. N-linked (GlcNAc...) asparagine glycans are attached at residues Asn150, Asn163, and Asn184. Residues Asp171–Ser194 are leucine-rich repeat receptor-like protein kinase binding. Cys202 and Cys210 are oxidised to a cystine. Residues Ala239–Phe259 traverse the membrane as a helical segment. Over Ala260 to Arg625 the chain is Cytoplasmic. 3 positions are modified to phosphoserine: Ser291, Ser299, and Ser303. Positions Phe302–Gln589 constitute a Protein kinase domain. Residue Leu308–Val316 participates in ATP binding. Thr325 bears the Phosphothreonine mark. Lys330 is an ATP binding site. Thr337 and Thr346 each carry phosphothreonine. Phosphoserine is present on residues Ser352, Ser383, Ser386, and Ser394. Residue Thr402 is modified to Phosphothreonine. Residue Ser415 is modified to Phosphoserine. The active-site Proton acceptor is the Asp429. Tyr456 is modified (phosphotyrosine). Phosphothreonine occurs at positions 459, 462, 463, and 468. Phosphotyrosine is present on Tyr476. Ser478 is modified (phosphoserine). Position 479 is a phosphothreonine (Thr479). The residue at position 483 (Ser483) is a Phosphoserine. Position 541 is a phosphothreonine (Thr541). Tyr543 carries the phosphotyrosine modification. At Thr559 the chain carries Phosphothreonine. A phosphoserine mark is found at Ser606 and Ser612. Thr613 carries the phosphothreonine modification. Tyr614 carries the post-translational modification Phosphotyrosine. Ser622 carries the post-translational modification Phosphoserine.

It belongs to the protein kinase superfamily. Ser/Thr protein kinase family. In terms of assembly, monomer, homo- and heterodimer. Interacts with KAPP, CDC48A, GRF6 or GRF7, SERK2, BRI1 and SERK3/BAK1 to form the SERK1 signaling complex. Bind to BRI1 in a brassinolide-dependent manner. Heterodimer with PSKR1. Interacts with the EF-Tu receptor EFR and FLS2 in a specific ligand-induced manner. Interacts with ERECTA in a EPF2-induced manner. Interacts with ERL1 in a EPF1-induced manner. Interacts with TMM. In the presence of the signal peptide RGF1, interacts with RGI1/RGFR4/RCH2, RGI2/RGFR3/RCH1, RGI3/RGFR1, RGI4/RGFR2/SKM2 and RGI5/RGFR5. It depends on Mg(2+) as a cofactor. Glycosylated. Important for targeting to the plasma membrane. Post-translationally, intermolecular autophosphorylation. The catalytic activity of SERK1 depends on the presence of a phosphorylated Thr residue in SERK1. The phosphorylation is induced by brassinosteroids. Transphosphorylation by BRI1 occurs only on Ser-299 and Thr-462. Dephosphorylation of threonine residues by the kinase-associated protein phosphatase (KAPP) is involved in SERK1 endocytosis. As to expression, expressed in flowers, tapetum, developing microspores, all cells of the embryo sac, provascular strands and developing vascular bundles. Low expression in adult vascular tissue. Detected in root meristem.

Its subcellular location is the cell membrane. It localises to the endoplasmic reticulum membrane. The enzyme catalyses L-seryl-[protein] + ATP = O-phospho-L-seryl-[protein] + ADP + H(+). The catalysed reaction is L-threonyl-[protein] + ATP = O-phospho-L-threonyl-[protein] + ADP + H(+). It carries out the reaction L-tyrosyl-[protein] + ATP = O-phospho-L-tyrosyl-[protein] + ADP + H(+). With respect to regulation, inhibited by manganese. In terms of biological role, dual specificity kinase acting on both serine/threonine- and tyrosine-containing substrates. Phosphorylates BRI1 on 'Ser-887' and CDC48 on at least one threonine residue and on 'Ser-41'. Confers embryogenic competence. Acts redundantly with SERK2 as a control point for sporophytic development controlling male gametophyte production. Involved in the brassinolide signaling pathway. Probably required during small peptide (e.g. RGF1) signaling. Involved in the perception of phytosulfokine and subsequent signal transduction. Acts as a RLK5 coreceptor and promotes high-affinity IDA sensing, thus being a positive regulator of floral abscission. This is Somatic embryogenesis receptor kinase 1 from Arabidopsis thaliana (Mouse-ear cress).